A 292-amino-acid polypeptide reads, in one-letter code: Glycine--tRNA ligase alpha subunit (292 aa).

The protein belongs to the class-II aminoacyl-tRNA synthetase family. Tetramer of two alpha and two beta subunits.

It is found in the cytoplasm. The catalysed reaction is tRNA(Gly) + glycine + ATP = glycyl-tRNA(Gly) + AMP + diphosphate. The sequence is that of Glycine--tRNA ligase alpha subunit from Clostridioides difficile (strain 630) (Peptoclostridium difficile).